Consider the following 299-residue polypeptide: Methionyl-tRNA formyltransferase (299 aa).

109-112 (SLLP) contributes to the (6S)-5,6,7,8-tetrahydrofolate binding site.

Belongs to the Fmt family.

It carries out the reaction L-methionyl-tRNA(fMet) + (6R)-10-formyltetrahydrofolate = N-formyl-L-methionyl-tRNA(fMet) + (6S)-5,6,7,8-tetrahydrofolate + H(+). Functionally, attaches a formyl group to the free amino group of methionyl-tRNA(fMet). The formyl group appears to play a dual role in the initiator identity of N-formylmethionyl-tRNA by promoting its recognition by IF2 and preventing the misappropriation of this tRNA by the elongation apparatus. This Dinoroseobacter shibae (strain DSM 16493 / NCIMB 14021 / DFL 12) protein is Methionyl-tRNA formyltransferase.